The sequence spans 311 residues: Homeobox-leucine zipper protein ATHB-6 (311 aa).

Polar residues predominate over residues 1–10 (MMKRLSSSDS). Residues 1 to 32 (MMKRLSSSDSVGGLISLCPTTSTDEQSPRRYG) are disordered. The tract at residues 1-43 (MMKRLSSSDSVGGLISLCPTTSTDEQSPRRYGGREFQSMLEGY) is interaction with ABI1. The segment at residues 59–118 (LSEKKRRLSINQVKALEKNFELENKLEPERKVKLAQELGLQPRQVAVWFQNRRARWKTKQ) is a DNA-binding region (homeobox). The interval 119–154 (LEKDYGVLKTQYDSLRHNFDSLRRDNESLLQEISKL) is leucine-zipper. The interval 157 to 183 (KLNGGGGEEEEEENNAAVTTESDISVK) is disordered. Residues 218-311 (LRDLLPLKAA…HWYSTVDHWN (94 aa)) form an interaction with ABI1 region.

It belongs to the HD-ZIP homeobox family. Class I subfamily. Interacts with ABI1. Post-translationally, phosphorylated by PKA. Reversible inactivation of the binding to DNA by phosphorylation. As to expression, widely expressed.

Its subcellular location is the nucleus. Functionally, transcription activator that may act as growth regulators in response to water deficit. Interacts with the core sequence 5'-CAATTATTA-3' of promoters in response to ABA and in an ABI1-dependent manner. Involved in the negative regulation of the ABA signaling pathway. In Arabidopsis thaliana (Mouse-ear cress), this protein is Homeobox-leucine zipper protein ATHB-6 (ATHB-6).